Consider the following 545-residue polypeptide: CTP synthase (545 aa).

The segment at 1 to 266 (MTTKYIFVTG…DEICVKRFGL (266 aa)) is amidoligase domain. Serine 14 provides a ligand contact to CTP. Serine 14 lines the UTP pocket. Residues 15–20 (SLGKGI) and aspartate 72 contribute to the ATP site. Mg(2+)-binding residues include aspartate 72 and glutamate 140. Residues 147–149 (DIE), 187–192 (KTKPTQ), and lysine 223 contribute to the CTP site. UTP-binding positions include 187–192 (KTKPTQ) and lysine 223. ATP is bound at residue 239-241 (RDV). Residues 291–542 (IIGMVGKYTE…IKSAIDHQQG (252 aa)) form the Glutamine amidotransferase type-1 domain. Residue glycine 352 coordinates L-glutamine. The Nucleophile; for glutamine hydrolysis role is filled by cysteine 379. L-glutamine contacts are provided by residues 380–383 (LGMQ), glutamate 403, and arginine 470. Residues histidine 515 and glutamate 517 contribute to the active site.

Belongs to the CTP synthase family. As to quaternary structure, homotetramer.

It catalyses the reaction UTP + L-glutamine + ATP + H2O = CTP + L-glutamate + ADP + phosphate + 2 H(+). The catalysed reaction is L-glutamine + H2O = L-glutamate + NH4(+). It carries out the reaction UTP + NH4(+) + ATP = CTP + ADP + phosphate + 2 H(+). It functions in the pathway pyrimidine metabolism; CTP biosynthesis via de novo pathway; CTP from UDP: step 2/2. Its activity is regulated as follows. Allosterically activated by GTP, when glutamine is the substrate; GTP has no effect on the reaction when ammonia is the substrate. The allosteric effector GTP functions by stabilizing the protein conformation that binds the tetrahedral intermediate(s) formed during glutamine hydrolysis. Inhibited by the product CTP, via allosteric rather than competitive inhibition. Its function is as follows. Catalyzes the ATP-dependent amination of UTP to CTP with either L-glutamine or ammonia as the source of nitrogen. Regulates intracellular CTP levels through interactions with the four ribonucleotide triphosphates. This Psychromonas ingrahamii (strain DSM 17664 / CCUG 51855 / 37) protein is CTP synthase.